We begin with the raw amino-acid sequence, 129 residues long: Putative membrane protein insertion efficiency factor (129 aa).

The protein belongs to the UPF0161 family.

Its subcellular location is the cell inner membrane. In terms of biological role, could be involved in insertion of integral membrane proteins into the membrane. The sequence is that of Putative membrane protein insertion efficiency factor from Rhodopseudomonas palustris (strain TIE-1).